The following is a 325-amino-acid chain: tRNA dimethylallyltransferase (325 aa).

An ATP-binding site is contributed by 21–28 (GPTASGKS). 23 to 28 (TASGKS) contacts substrate. The tract at residues 166-170 (QRLAR) is interaction with substrate tRNA.

This sequence belongs to the IPP transferase family. In terms of assembly, monomer. It depends on Mg(2+) as a cofactor.

The catalysed reaction is adenosine(37) in tRNA + dimethylallyl diphosphate = N(6)-dimethylallyladenosine(37) in tRNA + diphosphate. Functionally, catalyzes the transfer of a dimethylallyl group onto the adenine at position 37 in tRNAs that read codons beginning with uridine, leading to the formation of N6-(dimethylallyl)adenosine (i(6)A). The protein is tRNA dimethylallyltransferase of Acidiphilium cryptum (strain JF-5).